Consider the following 444-residue polypeptide: NAD-capped RNA hydrolase NUDT12 (444 aa).

ANK repeat units follow at residues glutamate 11–asparagine 40 and serine 60–leucine 80. N6-succinyllysine is present on lysine 167. Residues cysteine 266 and cysteine 269 each coordinate Zn(2+). The residue at position 274 (lysine 274) is an N6-succinyllysine. Cysteine 284 and cysteine 289 together coordinate Zn(2+). Residues tyrosine 300, alanine 336–phenylalanine 338, glutamate 352, glutamate 356, and glutamate 397 contribute to the substrate site. A Nudix hydrolase domain is found at proline 301 to lysine 435. Positions 336, 352, 356, and 397 each coordinate Mg(2+). Positions glycine 337–glycine 358 match the Nudix box motif. The Microbody targeting signal signature appears at proline 442–leucine 444.

It belongs to the Nudix hydrolase family. NudC subfamily. Homodimer. Homodimerization is essential for its catalytic activity and protein stability. Interacts (via ANK repeats) with BLMH. Mg(2+) is required as a cofactor. Requires Zn(2+) as cofactor.

The protein resides in the cytoplasm. Its subcellular location is the peroxisome. It localises to the cytoplasmic granule. It catalyses the reaction a 5'-end NAD(+)-phospho-ribonucleoside in mRNA + H2O = a 5'-end phospho-adenosine-phospho-ribonucleoside in mRNA + beta-nicotinamide D-ribonucleotide + 2 H(+). The catalysed reaction is NAD(+) + H2O = beta-nicotinamide D-ribonucleotide + AMP + 2 H(+). The enzyme catalyses NADH + H2O = reduced beta-nicotinamide D-ribonucleotide + AMP + 2 H(+). It carries out the reaction NADPH + H2O = reduced beta-nicotinamide D-ribonucleotide + adenosine 2',5'-bisphosphate + 2 H(+). MRNA decapping enzyme that specifically removes the nicotinamide adenine dinucleotide (NAD) cap from a subset of mRNAs by hydrolyzing the diphosphate linkage to produce nicotinamide mononucleotide (NMN) and 5' monophosphate mRNA. The NAD-cap is present at the 5'-end of some RNAs; in contrast to the canonical N7 methylguanosine (m7G) cap, the NAD cap promotes mRNA decay. Preferentially acts on NAD-capped transcripts in response to nutrient stress. Also acts on free nicotinamide adenine dinucleotide molecules: hydrolyzes NAD(H) into NMN(H) and AMP, and NADPH into NMNH and 2',5'-ADP. May act to regulate the concentration of peroxisomal nicotinamide nucleotide cofactors required for oxidative metabolism in this organelle. Regulates the levels of circadian clock components PER1, PER2, PER3 and CRY2 in the liver. This Bos taurus (Bovine) protein is NAD-capped RNA hydrolase NUDT12.